The sequence spans 445 residues: mRNA cleavage and polyadenylation factor CLP1 (445 aa).

Residues aspartate 33, lysine 72, and 133–138 (QTGKTS) contribute to the ATP site.

This sequence belongs to the Clp1 family. Clp1 subfamily. As to quaternary structure, component of the cleavage factor IA (CF IA) complex, which is a heterohexameric complex with 2:2:1:1 stoichiometry of RNA14, RNA15, PCF11 and CLP1. It contains 2 copies of an RNA14-RNA15 dimer and 1 copy of CLP1-PCF11. The complex interacts with the cleavage factor HRB1/CF IB to form the cleavage factor I (CF I) complex, and binds to RNA. Interacts directly with PCF11. Interacts with the CPF components CFT1, PTA1, PFS2, YSH1 and SSU72.

It is found in the nucleus. In terms of biological role, component of the cleavage factor IA (CF IA) complex, which is involved in the endonucleolytic cleavage during polyadenylation-dependent pre-mRNA 3'-end formation. Associates with HRB1/CF IB to form the cleavage factor I (CF I) complex. CF I is required for correct positioning of a larger protein complex, the cleavage and polyadenylation factor (CPF) complex, which contains the catalytic subunits executing mRNA cleavage and polyadenylation. CLP1 mediates interactions between CF IA and CPF factors. CLP1 is also involved in maintaining the CF IA interaction with the C-terminal domain of RNA Pol II largest subunit via PCF11, which links pre-mRNA 3'-end processing to transcription termination. This chain is mRNA cleavage and polyadenylation factor CLP1, found in Saccharomyces cerevisiae (strain YJM789) (Baker's yeast).